Reading from the N-terminus, the 1196-residue chain is Major DNA-binding protein (1196 aa).

The segment at 499-512 (CNLCTFETRHACAH) is a zinc-finger region. Short sequence motifs (required for filament formation) lie at residues 843-844 (FW) and 1142-1144 (FNF). The tract at residues 1171-1196 (RKRAFHGDDPFGEGPPEKKDLTLDML) is required for nuclear localization. The tract at residues 1176–1196 (HGDDPFGEGPPEKKDLTLDML) is disordered.

This sequence belongs to the herpesviridae major DNA-binding protein family. Homooligomers. Forms double-helical filaments necessary for the formation of replication compartments within the host nucleus. Interacts with the origin-binding protein. Interacts with the helicase primase complex; this interaction stimulates primer synthesis activity of the helicase-primase complex. Interacts with the DNA polymerase. Interacts with the alkaline exonuclease; this interaction increases its nuclease processivity.

The protein localises to the host nucleus. Plays several crucial roles in viral infection. Participates in the opening of the viral DNA origin to initiate replication by interacting with the origin-binding protein. May disrupt loops, hairpins and other secondary structures present on ssDNA to reduce and eliminate pausing of viral DNA polymerase at specific sites during elongation. Promotes viral DNA recombination by performing strand-transfer, characterized by the ability to transfer a DNA strand from a linear duplex to a complementary single-stranded DNA circle. Can also catalyze the renaturation of complementary single strands. Additionally, reorganizes the host cell nucleus, leading to the formation of prereplicative sites and replication compartments. This process is driven by the protein which can form double-helical filaments in the absence of DNA. In Human herpesvirus 2 (strain HG52) (HHV-2), this protein is Major DNA-binding protein.